Here is a 33-residue protein sequence, read N- to C-terminus: Photosystem II reaction center protein Psb30 (33 aa).

Residues 5–25 (VIAQLTVLSLIVLSGPLVIIL) form a helical membrane-spanning segment.

Belongs to the Psb30/Ycf12 family. PSII is composed of 1 copy each of membrane proteins PsbA, PsbB, PsbC, PsbD, PsbE, PsbF, PsbH, PsbI, PsbJ, PsbK, PsbL, PsbM, PsbT, PsbX, PsbY, PsbZ, Psb30/Ycf12, peripheral proteins of the oxygen-evolving complex and a large number of cofactors. It forms dimeric complexes.

The protein localises to the plastid. It is found in the chloroplast thylakoid membrane. Its function is as follows. A core subunit of photosystem II (PSII), probably helps stabilize the reaction center. This Chlorokybus atmophyticus (Soil alga) protein is Photosystem II reaction center protein Psb30.